A 325-amino-acid polypeptide reads, in one-letter code: tRNA U34 carboxymethyltransferase (325 aa).

Carboxy-S-adenosyl-L-methionine contacts are provided by lysine 93, tryptophan 107, lysine 112, glycine 132, methionine 198, tyrosine 202, and arginine 317.

Belongs to the class I-like SAM-binding methyltransferase superfamily. CmoB family. As to quaternary structure, homotetramer.

The catalysed reaction is carboxy-S-adenosyl-L-methionine + 5-hydroxyuridine(34) in tRNA = 5-carboxymethoxyuridine(34) in tRNA + S-adenosyl-L-homocysteine + H(+). In terms of biological role, catalyzes carboxymethyl transfer from carboxy-S-adenosyl-L-methionine (Cx-SAM) to 5-hydroxyuridine (ho5U) to form 5-carboxymethoxyuridine (cmo5U) at position 34 in tRNAs. In Desulforapulum autotrophicum (strain ATCC 43914 / DSM 3382 / VKM B-1955 / HRM2) (Desulfobacterium autotrophicum), this protein is tRNA U34 carboxymethyltransferase.